Reading from the N-terminus, the 204-residue chain is Dephospho-CoA kinase (204 aa).

A DPCK domain is found at 12 to 204 (RIGVTGGIAS…AWRDQISSIC (193 aa)). 20–25 (ASGKSS) contacts ATP.

This sequence belongs to the CoaE family.

It localises to the cytoplasm. The enzyme catalyses 3'-dephospho-CoA + ATP = ADP + CoA + H(+). It functions in the pathway cofactor biosynthesis; coenzyme A biosynthesis; CoA from (R)-pantothenate: step 5/5. Catalyzes the phosphorylation of the 3'-hydroxyl group of dephosphocoenzyme A to form coenzyme A. The sequence is that of Dephospho-CoA kinase from Prochlorococcus marinus (strain MIT 9313).